The chain runs to 565 residues: Membrane protein insertase YidC (565 aa).

The next 6 helical transmembrane spans lie at 6–26 (VLLIFSWLTVATLLWMDWGKN), 348–368 (LMALIGQGLFWILSHLNSLLH), 370–390 (WGWAIVGLVVLLRIAMYPLSA), 437–457 (GGCFPILIQMPIFFALYWVLV), 479–499 (PYFILPLLNIVIMWATQKLTP), and 516–536 (PLIFGVMMAFVPSGLALYWVI).

Belongs to the OXA1/ALB3/YidC family. Type 1 subfamily. As to quaternary structure, interacts with the Sec translocase complex via SecD. Specifically interacts with transmembrane segments of nascent integral membrane proteins during membrane integration.

It localises to the cell inner membrane. In terms of biological role, required for the insertion and/or proper folding and/or complex formation of integral membrane proteins into the membrane. Involved in integration of membrane proteins that insert both dependently and independently of the Sec translocase complex, as well as at least some lipoproteins. Aids folding of multispanning membrane proteins. The sequence is that of Membrane protein insertase YidC from Xylella fastidiosa (strain 9a5c).